A 253-amino-acid polypeptide reads, in one-letter code: Aminoglycoside nucleotidyltransferase (4') (253 aa).

An N-terminal domain region spans residues 1 to 127; the sequence is MNGPIIMTRE…KVYQTAKSVE (127 aa). 5 residues coordinate ATP: S39, R42, S49, D50, and E52. 2 residues coordinate Mg(2+): D50 and E52. Neomycin B contacts are provided by E52 and E67. Kanamycin A is bound by residues E67, K74, E76, E141, and E145. A C-terminal domain region spans residues 128–241; sequence AQTFHDAICA…NGIQEWTERH (114 aa). Residues E145, K149, and T187 each contribute to the ATP site. A Mg(2+)-binding site is contributed by E145. The active-site Proton acceptor is E145.

Homodimer. Requires Mg(2+) as cofactor.

The enzyme catalyses amikacin + ATP = 4'-adenylylamikacin + diphosphate. The catalysed reaction is kanamycin A + ATP = 4'-adenylylkanamycin A + diphosphate. It catalyses the reaction neomycin B + ATP = 4'-adenylylneomycin B + diphosphate. It carries out the reaction paromomycin + ATP = 4'-adenylylparomomycin + diphosphate. The enzyme catalyses ribostamycin + ATP = 4'-adenylylribostamycin + diphosphate. The catalysed reaction is tobramycin + ATP = 4'-adenylyltobramycin + diphosphate. It catalyses the reaction kanamycin A + CTP = 4'-cytidylylkanamycin A + diphosphate. It carries out the reaction kanamycin A + GTP = 4'-guanylylkanamycin A + diphosphate. The enzyme catalyses kanamycin A + ITP = 4'-inosinylylkanamycin A + diphosphate. The catalysed reaction is dTTP + kanamycin A = 4'-thymidylylkanamycin A + diphosphate. It catalyses the reaction kanamycin A + UTP = 4'-uridylylkanamycin A + diphosphate. It carries out the reaction kanamycin A + dATP = 4'-(2'-deoxyadenylyl)kanamycin A + diphosphate. The enzyme catalyses kanamycin A + dCTP = 4'-(2'-deoxycytidylyl)kanamycin A + diphosphate. The catalysed reaction is kanamycin A + dGTP = 4'-(2'-deoxyguanylyl)kanamycin A + diphosphate. It catalyses the reaction dUTP + kanamycin A = 4'-(2'-deoxyuridylyl)kanamycin A + diphosphate. It carries out the reaction amikacin + GTP = 4'-guanylylamikacin + diphosphate. The enzyme catalyses amikacin + ITP = 4'-inosinylylamikacin + diphosphate. The catalysed reaction is amikacin + CTP = 4'-cytidylylamikacin + diphosphate. It catalyses the reaction amikacin + UTP = 4'-uridylylamikacin + diphosphate. It carries out the reaction amikacin + dTTP = 4'-thymidylylamikacin + diphosphate. In terms of biological role, inactivates aminoglycoside antibiotics such as kanamycin by catalyzing the transfer of a nucleotidyl group from a wide variety of nucleoside triphosphates ((d)ATP, (d)CTP, (d)GTP, ITP, TTP and (d)UTP) to the 4'-hydroxyl group of the aminoglycoside. In vitro, antibiotics without the 4'-hydroxyl but possessing a 4''-hydroxyl group (e.g. sisomicin and gentamicin) are also modifed but with poor specificity. The 3' position of the NTP ribose ring does not tolerate large substitutions (e.g. ddATP) and dNTPs and TTP are better substrates than their NTP counterparts. A short (2.35 Angstrom) hydrogen bond initially facilitates tight binding of the substrate (between Glu-52 and antibiotic) that is subsequently disrupted by the assembly of the active ternary complex. This enables the release of products post-catalysis, a 'catch and release' mechanism. This is Aminoglycoside nucleotidyltransferase (4') (knt) from Staphylococcus aureus.